Consider the following 123-residue polypeptide: Large ribosomal subunit protein bL12 (123 aa).

This sequence belongs to the bacterial ribosomal protein bL12 family. Homodimer. Part of the ribosomal stalk of the 50S ribosomal subunit. Forms a multimeric L10(L12)X complex, where L10 forms an elongated spine to which 2 to 4 L12 dimers bind in a sequential fashion. Binds GTP-bound translation factors.

Forms part of the ribosomal stalk which helps the ribosome interact with GTP-bound translation factors. Is thus essential for accurate translation. This Clostridium botulinum (strain ATCC 19397 / Type A) protein is Large ribosomal subunit protein bL12.